A 592-amino-acid chain; its full sequence is Leucine-rich repeat and immunoglobulin-like domain-containing nogo receptor-interacting protein 3 (592 aa).

An N-terminal signal peptide occupies residues 1-24 (MTCWLCVLSLPLLLLPAAPPPAGG). An LRRNT domain is found at 25–54 (CPARCECTVQTRAVACTRRRLTAVPDGIPA). Residues 25 to 531 (CPARCECTVQ…LDLTTILVST (507 aa)) lie on the Extracellular side of the membrane. LRR repeat units follow at residues 55 to 76 (ETRLLELSRNRIRCLNPGDLAA), 79 to 100 (ALEELDLSENAIAHVEPGAFAN), 103 to 124 (RLRVLRLRGNQLKLIPPGVFTR), 127 to 148 (NLTLLDLSENKLVILLDYTFQD), 151 to 172 (SLRRLEVGDNDLVFVSRRAFAG), 175 to 196 (ALEELTLERCNLTALSGESLGH), 207 to 228 (HLAIASLEDQNFRRLPGLLHLE), 247 to 268 (NLTSLSVTHTNITAVPAAALRH), 271 to 292 (HLTCLNLSHNPISTVPRGSFRD), 295 to 316 (RLRELHLAGALLAVVEPQAFLG), and 319 to 340 (QIRLLNLSNNLLSTLEESTFHS). Asparagine 127 carries an N-linked (GlcNAc...) asparagine glycan. Residue asparagine 185 is glycosylated (N-linked (GlcNAc...) asparagine). 3 N-linked (GlcNAc...) asparagine glycosylation sites follow: asparagine 247, asparagine 257, and asparagine 276. Residue asparagine 324 is glycosylated (N-linked (GlcNAc...) asparagine). An LRRCT domain is found at 352–406 (NPLACDCRLLWIVQRRKTLNFDGRLPACATPAEVRGDALRNLPDSVLFEYFVCRK). The Ig-like C2-type domain maps to 407-496 (PKIRERRLQR…GNDTYFATLT (90 aa)). The cysteines at positions 429 and 480 are disulfide-linked. N-linked (GlcNAc...) asparagine glycosylation is found at asparagine 488 and asparagine 512. Residues 532-552 (AMGCITFLGVVLFCFVLLFVW) form a helical membrane-spanning segment. Topologically, residues 553-592 (SRGRGQHKNNFSVEYSFRKVDGPAAAAGQGGARKFNMKMI) are cytoplasmic.

It localises to the membrane. The chain is Leucine-rich repeat and immunoglobulin-like domain-containing nogo receptor-interacting protein 3 (LINGO3) from Homo sapiens (Human).